We begin with the raw amino-acid sequence, 311 residues long: tRNA dimethylallyltransferase (311 aa).

9–16 (GPTAVGKT) is a binding site for ATP. 11 to 16 (TAVGKT) contributes to the substrate binding site. Residues 34–37 (DSMQ) are interaction with substrate tRNA.

It belongs to the IPP transferase family. In terms of assembly, monomer. The cofactor is Mg(2+).

It carries out the reaction adenosine(37) in tRNA + dimethylallyl diphosphate = N(6)-dimethylallyladenosine(37) in tRNA + diphosphate. Catalyzes the transfer of a dimethylallyl group onto the adenine at position 37 in tRNAs that read codons beginning with uridine, leading to the formation of N6-(dimethylallyl)adenosine (i(6)A). In Clostridium botulinum (strain Hall / ATCC 3502 / NCTC 13319 / Type A), this protein is tRNA dimethylallyltransferase.